We begin with the raw amino-acid sequence, 1509 residues long: Putative endo-alpha-N-acetylgalactosaminidase (1509 aa).

The signal sequence occupies residues 1–41 (MPFRGRRRQSALRGLSLAATFCLAAGSSGISGALFATPAQA). 5 residues coordinate Ca(2+): Asp288, Asn290, Asp292, Lys294, and Asp299. The catalytic stretch occupies residues 313–585 (GGDDVKNRVV…NLPVKFLQQQ (273 aa)). Residue Asp369 coordinates substrate. Asp472 functions as the Nucleophile in the catalytic mechanism. Glu498 serves as the catalytic Proton donor/acceptor. Ca(2+) contacts are provided by Asn878, Glu880, Asp926, and Tyr929. Disordered stretches follow at residues 1176 to 1197 (NGWG…DGPP) and 1403 to 1439 (IKAA…SGGG). The segment covering 1407–1428 (NPNPGTGSNPGTGSNPGTDPGT) has biased composition (low complexity). Positions 1429–1439 (GSAGGNSSGGG) are enriched in gly residues. The LPXTG sorting signal motif lies at 1475–1479 (LAETG). Thr1478 carries the pentaglycyl murein peptidoglycan amidated threonine modification. The propeptide at 1479-1509 (GFSGLVLPLGIGLMLLLIGAAAIIVRRHRHS) is removed by sortase.

The protein belongs to the glycosyl hydrolase 101 family. A subfamily.

The protein resides in the secreted. It is found in the cell wall. It carries out the reaction a 3-O-[beta-D-galactosyl-(1-&gt;3)-N-acetyl-alpha-D-galactosaminyl]-L-threonyl-[protein] + H2O = beta-D-galactosyl-(1-&gt;3)-N-acetyl-D-galactosamine + L-threonyl-[protein]. The enzyme catalyses a 3-O-[beta-D-galactosyl-(1-&gt;3)-N-acetyl-alpha-D-galactosaminyl]-L-seryl-[protein] + H2O = beta-D-galactosyl-(1-&gt;3)-N-acetyl-D-galactosamine + L-seryl-[protein]. Functionally, probably involved in the breakdown of mucin-type O-linked glycans. Specifically removes the T-antigen disaccharide (Gal-beta-1,3-GalNAc-alpha) from extracellular host glycoproteins. This is Putative endo-alpha-N-acetylgalactosaminidase from Renibacterium salmoninarum (strain ATCC 33209 / DSM 20767 / JCM 11484 / NBRC 15589 / NCIMB 2235).